Consider the following 307-residue polypeptide: MVSQTTSEVQPTMGVKIFSAGVAACLADIITFPLDTAKVRLQIQGEGQTSSTIRYKGVLGTITTLAKTEGLPKLYSGLPAGIQRQISFASLRIGLYDTVQEYFSSGKETPPTLVNRISAGLMTGGVAVFIGQPTEVVKVRLQAQSHLHGIKPRYTGTYNAYRIIATTESLSTLWKGTTPNLLRNVIINCTELVTYDLMKGALVNNQILADDVPCHLLSALVAGFCTTFLASPADVVKTRFINSLPGQYPSVPSCAMTMFTKEGPTAFFKGFVPSFLRLASWNVIMFVCFEQLKKELMKSRQTVDCTT.

At 1-10 (MVSQTTSEVQ) the chain is on the mitochondrial intermembrane side. The helical transmembrane segment at 11-32 (PTMGVKIFSAGVAACLADIITF) threads the bilayer. Solcar repeat units lie at residues 11–102 (PTMG…VQEY), 111–201 (PTLV…MKGA), and 210–295 (DDVP…LKKE). The Mitochondrial matrix segment spans residues 33 to 73 (PLDTAKVRLQIQGEGQTSSTIRYKGVLGTITTLAKTEGLPK). Lys-56 serves as a coordination point for fatty acid 16:0. A helical transmembrane segment spans residues 74–96 (LYSGLPAGIQRQISFASLRIGLY). Residues 97–116 (DTVQEYFSSGKETPPTLVNR) are Mitochondrial intermembrane-facing. The chain crosses the membrane as a helical span at residues 117 to 133 (ISAGLMTGGVAVFIGQP). Residues 134 to 178 (TEVVKVRLQAQSHLHGIKPRYTGTYNAYRIIATTESLSTLWKGTT) are Mitochondrial matrix-facing. Residues 179–195 (PNLLRNVIINCTELVTY) traverse the membrane as a helical segment. The Mitochondrial intermembrane segment spans residues 196-212 (DLMKGALVNNQILADDV). The helical transmembrane segment at 213–232 (PCHLLSALVAGFCTTFLASP) threads the bilayer. The Mitochondrial matrix segment spans residues 233 to 266 (ADVVKTRFINSLPGQYPSVPSCAMTMFTKEGPTA). Cys-254 bears the Cysteine sulfenic acid (-SOH) mark. The helical transmembrane segment at 267–289 (FFKGFVPSFLRLASWNVIMFVCF) threads the bilayer. Lys-269 lines the fatty acid 16:0 pocket. Over 290–307 (EQLKKELMKSRQTVDCTT) the chain is Mitochondrial intermembrane.

It belongs to the mitochondrial carrier (TC 2.A.29) family. Most probably functions as a monomer. Binds one purine nucleotide per monomer. However, has also been suggested to function as a homodimer or a homotetramer. Tightly associates with cardiolipin in the mitochondrion inner membrane; may stabilize and regulate its activity. In terms of processing, may undergo sulfenylation upon cold exposure. May increase the sensitivity of UCP1 thermogenic function to the activation by noradrenaline probably through structural effects. May undergo ubiquitin-mediated proteasomal degradation. In terms of tissue distribution, brown adipose tissue.

It localises to the mitochondrion inner membrane. It carries out the reaction H(+)(in) = H(+)(out). Has no constitutive proton transporter activity and has to be activated by long-chain fatty acids/LCFAs. Inhibited by purine nucleotides. Both purine nucleotides and LCFAs bind the cytosolic side of the transporter and directly compete to activate or inhibit it. Activated by noradrenaline and reactive oxygen species. Despite lacking canonical translational encoding for selenocysteine, a small pool of the protein has been observed to selectively incorporate selenocysteine at 'Cys-254'. Selenocysteine-modified protein is highly sensitive to redox modification and may constitute a pool of protein highly sensitive to activation by elevated levels of reactive oxygen species (ROS). Functionally, mitochondrial protein responsible for thermogenic respiration, a specialized capacity of brown adipose tissue and beige fat that participates in non-shivering adaptive thermogenesis to temperature and diet variations and more generally to the regulation of energy balance. Functions as a long-chain fatty acid/LCFA and proton symporter, simultaneously transporting one LCFA and one proton through the inner mitochondrial membrane. However, LCFAs remaining associated with the transporter via their hydrophobic tails, it results in an apparent transport of protons activated by LCFAs. Thereby, dissipates the mitochondrial proton gradient and converts the energy of substrate oxydation into heat instead of ATP. Regulates the production of reactive oxygen species/ROS by mitochondria. The sequence is that of Mitochondrial brown fat uncoupling protein 1 from Phodopus sungorus (Striped hairy-footed hamster).